The following is a 122-amino-acid chain: MIQIQSYLNIADNSGARKIMCIQVLGSNNPHYANIGDIIIGVVKDALPNMPIKKSDIIRAVIVRTKKTIRRNDGMSIRFDDNAAVIINQENNPRGTRVFGPIAKELRDKNFSKIISLAAEVV.

This sequence belongs to the universal ribosomal protein uL14 family. In terms of assembly, part of the 50S ribosomal subunit.

The protein localises to the plastid. It is found in the chloroplast. Binds to 23S rRNA. This chain is Large ribosomal subunit protein uL14c, found in Gracilaria tenuistipitata var. liui (Red alga).